A 91-amino-acid polypeptide reads, in one-letter code: Small ribosomal subunit protein uS19 (91 aa).

This sequence belongs to the universal ribosomal protein uS19 family.

Functionally, protein S19 forms a complex with S13 that binds strongly to the 16S ribosomal RNA. This Acinetobacter baumannii (strain AB307-0294) protein is Small ribosomal subunit protein uS19.